Consider the following 109-residue polypeptide: NAD(P)H-quinone oxidoreductase subunit M (109 aa).

It belongs to the complex I NdhM subunit family. In terms of assembly, NDH-1 can be composed of about 15 different subunits; different subcomplexes with different compositions have been identified which probably have different functions.

The protein localises to the cellular thylakoid membrane. It catalyses the reaction a plastoquinone + NADH + (n+1) H(+)(in) = a plastoquinol + NAD(+) + n H(+)(out). The enzyme catalyses a plastoquinone + NADPH + (n+1) H(+)(in) = a plastoquinol + NADP(+) + n H(+)(out). Its function is as follows. NDH-1 shuttles electrons from an unknown electron donor, via FMN and iron-sulfur (Fe-S) centers, to quinones in the respiratory and/or the photosynthetic chain. The immediate electron acceptor for the enzyme in this species is believed to be plastoquinone. Couples the redox reaction to proton translocation, and thus conserves the redox energy in a proton gradient. Cyanobacterial NDH-1 also plays a role in inorganic carbon-concentration. This Microcystis aeruginosa (strain NIES-843 / IAM M-2473) protein is NAD(P)H-quinone oxidoreductase subunit M.